The primary structure comprises 946 residues: Protein translocase subunit SecA (946 aa).

ATP contacts are provided by residues Gln-87, 105-109 (GEGKT), and Asp-524. The interval 904 to 933 (PAQTTDKADRDPNKPETWGKVGRNEDCPCG) is disordered. Zn(2+) is bound by residues Cys-930, Cys-932, Cys-941, and His-942.

The protein belongs to the SecA family. As to quaternary structure, monomer and homodimer. Part of the essential Sec protein translocation apparatus which comprises SecA, SecYEG and auxiliary proteins SecDF-YajC and YidC. Zn(2+) is required as a cofactor.

It is found in the cell inner membrane. Its subcellular location is the cytoplasm. The enzyme catalyses ATP + H2O + cellular proteinSide 1 = ADP + phosphate + cellular proteinSide 2.. In terms of biological role, part of the Sec protein translocase complex. Interacts with the SecYEG preprotein conducting channel. Has a central role in coupling the hydrolysis of ATP to the transfer of proteins into and across the cell membrane, serving both as a receptor for the preprotein-SecB complex and as an ATP-driven molecular motor driving the stepwise translocation of polypeptide chains across the membrane. The polypeptide is Protein translocase subunit SecA (Rhodopseudomonas palustris (strain TIE-1)).